We begin with the raw amino-acid sequence, 197 residues long: UPF0462 protein C4orf33 homolog (197 aa).

Belongs to the UPF0462 family.

The protein is UPF0462 protein C4orf33 homolog of Danio rerio (Zebrafish).